Here is a 1770-residue protein sequence, read N- to C-terminus: MESQQLHQNPHCPHGSAYASVTSKEVPSNQDPLAVSASNLPEFDRDSTKVNSQEETTPGTSAVPENHHHVSPQPASVPPPQNGQYQQHGMMTPNKAMASNWAHYQQPSMMTCSHYQTSPAYYQPDPHYPLPQYIPPLSTSSPDPIDSQDQHSEVPQAKTKVRNNVLPPHPHTSEENFSTWVKFYIRFLKNSNLGDIIPNDQGEIKRQMTYEEHAYIYNTFQAFAPFHLLPTWVKQILEINYSDILTVLCKSVSKMQTNNQELKDWIALANLEYNGSTSADTFEITVSTIIQRLKENNINVSDRLACQLILKGLSGDFKYLRNQYRTKTNMKLSQLFAEIQLIYDENKIMNLNKPSQYKQHSEYKNVSRTSPNTTNTKVTTRNYHRTNSSKPRAAKAHNIATSSKFSRVNNDHINESTVSSQYLSDDNELSLGQQQKESKPTRTIDSNDELPDHLLIDSGASQTLVRSAHYLHHATPNSEINIVDAQKQDIPINAIGNLHFNFQNGTKTSIKALHTPNIAYDLLSLSELTNQNITACFTRNTLERSDGTVLAPIVKHGDFYWLSKKYLIPSHISKLTINNVNKSKSVNKYPYPLIHRMLGHANFRSIQKSLKKNAVTYLKESDIEWSNASTYQCPDCLIGKSTKHRHVKGSRLKYQESYEPFQYLHTDIFGPVHHLPKSAPSYFISFTDEKTRFQWVYPLHDRREESILNVFTSILAFIKNQFNARVLVIQMDRGSEYTNKTLHKFFTNRGITACYTTTADSRAHGVAERLNRTLLNDCRTLLHCSGLPNHLWFSAVEFSTIIRNSLVSPKNDKSARQHAGLAGLDITTILPFGQPVIVNNHNPDSKIHPRGIPGYALHPSRNSYGYIIYLPSLKKTVDTTNYVILQNNQTKLDQFDYDTLTFDDDLNRLTAHNQSFIEQNETEQSYDQNTESDHDYQSEIEINSDPLVNDFSSQSLNPLQLDKEPVQKVRAPKEVDADISEYNILPSTIRSRTPHIINKESTEMGGTIESDTTSPRHSSTFTARNQKRPGSPNDMIDLTSQDRVNYGLENIKTTRLGGTEEPYIQRNSDTNIKYRTTNSTPSIDDRSSNSDSTTPIISIETKAACDNTPSIDTDPPEYRSSDHATPNIMPDKSSKNVTADSILDDLPLPDLTHKSPTDTSDVSKDIPHIHSRQTNSSLGGMDDSNVLTTTKSKKRSLEDNETEIEVSRDTWNNKNMRSLEPPRSKKRINLIAAIKGVKSIKPVRTTLRYDEAITYNKDNKEKDRYVEAYHKEISQLLKMNTWDTNKYYDRNDIDPKKVINSMFIFNKKRDGTHKARFVARGDIQHPDTYDSDMQSNTVHHYALMTSLSIALDNDYYITQLDISSAYLYADIKEELYIRPPPHLGLNDKLLRLRKSLYGLKQSGANWYETIKSYLINCCDMQEVRGWSCVFKNSQVTICLFVDDMILFSKDLNANKKIITTLKKQYDTKIINLGEGDNEIQYDILGLEIKYQRSKYMKLGMEKSLTEKLPKLNVPLNPKGKKLRAPGQPGHYIDQDELEIDEDEYKEKVHEMQKLIGLASYVGYKFRFDLLYYINTLAQHILFPSRQVLDMTYELIQFMWDTRDKQLIWHKNKPTKPDNKLVAISDASYGNQPYYKSQIGNIFLLNGKVIGGKSTKASLTCTSTTEAEIHAVSEAIPLLNNLSHLVQELNKKPIIKGLLTDSRSTISIIKSTNEEKFRNRFFGTKAMRLRDEVSGNNLYVYYIETKKNIADVMTKPLPIKTFKLLTNKWIH.

2 disordered regions span residues 1–88 and 359–449; these read MESQ…YQQH and QHSE…SNDE. 2 stretches are compositionally biased toward polar residues: residues 19–39 and 49–60; these read ASVTSKEVPSNQDPLAVSASN and KVNSQEETTPGT. Positions 295-397 are RNA-binding; the sequence is ENNINVSDRL…SSKPRAAKAH (103 aa). Residues 369–381 are compositionally biased toward low complexity; sequence TSPNTTNTKVTTR. 2 stretches are compositionally biased toward polar residues: residues 399–408 and 415–435; these read IATSSKFSRV and ESTVSSQYLSDDNELSLGQQQ. The active-site For protease activity; shared with dimeric partner is Asp457. An integrase-type zinc finger-like region spans residues 579-636; the sequence is NVNKSKSVNKYPYPLIHRMLGHANFRSIQKSLKKNAVTYLKESDIEWSNASTYQCPDC. The region spanning 656-831 is the Integrase catalytic domain; sequence ESYEPFQYLH…AGLDITTILP (176 aa). Positions 667 and 732 each coordinate Mg(2+). Disordered stretches follow at residues 1005–1038, 1057–1135, 1146–1165, and 1170–1205; these read GGTIESDTTSPRHSSTFTARNQKRPGSPNDMIDL, GGTE…KSSK, LPLPDLTHKSPTDTSDVSKD, and HSRQTNSSLGGMDDSNVLTTTKSKKRSLEDNETEIE. Polar residues-rich tracts occupy residues 1009 to 1024 and 1065 to 1082; these read ESDTTSPRHSSTFTAR and QRNSDTNIKYRTTNSTPS. The span at 1151 to 1165 shows a compositional bias: basic and acidic residues; that stretch reads LTHKSPTDTSDVSKD. Positions 1193–1227 match the Bipartite nuclear localization signal motif; it reads KKRSLEDNETEIEVSRDTWNNKNMRSLEPPRSKKR. The Reverse transcriptase Ty1/copia-type domain occupies 1353-1491; the sequence is NDYYITQLDI…DILGLEIKYQ (139 aa). 6 residues coordinate Mg(2+): Asp1361, Asp1442, Asp1443, Asp1625, Glu1667, and Asp1700. An RNase H Ty1/copia-type domain is found at 1625 to 1767; sequence DASYGNQPYY…IKTFKLLTNK (143 aa).

In terms of assembly, the capsid protein forms a homotrimer, from which the VLPs are assembled. The protease is a homodimer, whose active site consists of two apposed aspartic acid residues. Initially, virus-like particles (VLPs) are composed of the structural unprocessed proteins Gag and Gag-Pol, and also contain the host initiator methionine tRNA (tRNA(i)-Met) which serves as a primer for minus-strand DNA synthesis, and a dimer of genomic Ty RNA. Processing of the polyproteins occurs within the particle and proceeds by an ordered pathway, called maturation. First, the protease (PR) is released by autocatalytic cleavage of the Gag-Pol polyprotein, and this cleavage is a prerequisite for subsequent processing at the remaining sites to release the mature structural and catalytic proteins. Maturation takes place prior to the RT reaction and is required to produce transposition-competent VLPs.

The protein resides in the cytoplasm. The protein localises to the nucleus. It carries out the reaction DNA(n) + a 2'-deoxyribonucleoside 5'-triphosphate = DNA(n+1) + diphosphate. The catalysed reaction is Endonucleolytic cleavage to 5'-phosphomonoester.. In terms of biological role, capsid protein (CA) is the structural component of the virus-like particle (VLP), forming the shell that encapsulates the retrotransposons dimeric RNA genome. The particles are assembled from trimer-clustered units and there are holes in the capsid shells that allow for the diffusion of macromolecules. CA also has nucleocapsid-like chaperone activity, promoting primer tRNA(i)-Met annealing to the multipartite primer-binding site (PBS), dimerization of Ty2 RNA and initiation of reverse transcription. Functionally, the aspartyl protease (PR) mediates the proteolytic cleavages of the Gag and Gag-Pol polyproteins after assembly of the VLP. Its function is as follows. Reverse transcriptase/ribonuclease H (RT) is a multifunctional enzyme that catalyzes the conversion of the retro-elements RNA genome into dsDNA within the VLP. The enzyme displays a DNA polymerase activity that can copy either DNA or RNA templates, and a ribonuclease H (RNase H) activity that cleaves the RNA strand of RNA-DNA heteroduplexes during plus-strand synthesis and hydrolyzes RNA primers. The conversion leads to a linear dsDNA copy of the retrotransposon that includes long terminal repeats (LTRs) at both ends. Integrase (IN) targets the VLP to the nucleus, where a subparticle preintegration complex (PIC) containing at least integrase and the newly synthesized dsDNA copy of the retrotransposon must transit the nuclear membrane. Once in the nucleus, integrase performs the integration of the dsDNA into the host genome. The chain is Transposon Ty2-OR2 Gag-Pol polyprotein (TY2B-OR2) from Saccharomyces cerevisiae (strain ATCC 204508 / S288c) (Baker's yeast).